The sequence spans 409 residues: Tryptophan synthase beta chain (409 aa).

K98 carries the post-translational modification N6-(pyridoxal phosphate)lysine.

It belongs to the TrpB family. As to quaternary structure, tetramer of two alpha and two beta chains. Requires pyridoxal 5'-phosphate as cofactor.

The catalysed reaction is (1S,2R)-1-C-(indol-3-yl)glycerol 3-phosphate + L-serine = D-glyceraldehyde 3-phosphate + L-tryptophan + H2O. The protein operates within amino-acid biosynthesis; L-tryptophan biosynthesis; L-tryptophan from chorismate: step 5/5. Functionally, the beta subunit is responsible for the synthesis of L-tryptophan from indole and L-serine. The chain is Tryptophan synthase beta chain (trpB) from Cereibacter sphaeroides (strain ATCC 17023 / DSM 158 / JCM 6121 / CCUG 31486 / LMG 2827 / NBRC 12203 / NCIMB 8253 / ATH 2.4.1.) (Rhodobacter sphaeroides).